The chain runs to 379 residues: Chaperone protein DnaJ (379 aa).

In terms of domain architecture, J spans 5–69; that stretch reads EYYERLGVDK…QKRAAYDQYG (65 aa). Residues 141 to 223 form a CR-type zinc finger; that stretch reads GVEKQVKYNR…CHGSGHEKVA (83 aa). Positions 154, 157, 171, 174, 197, 200, and 214 each coordinate Zn(2+). CXXCXGXG motif repeat units lie at residues 154 to 161, 171 to 178, 197 to 204, and 211 to 218; these read CHTCGGSG, CHKCGGRG, CDVCHGTG, and STTCHGSG.

It belongs to the DnaJ family. In terms of assembly, homodimer. Requires Zn(2+) as cofactor.

Its subcellular location is the cytoplasm. Its function is as follows. Participates actively in the response to hyperosmotic and heat shock by preventing the aggregation of stress-denatured proteins and by disaggregating proteins, also in an autonomous, DnaK-independent fashion. Unfolded proteins bind initially to DnaJ; upon interaction with the DnaJ-bound protein, DnaK hydrolyzes its bound ATP, resulting in the formation of a stable complex. GrpE releases ADP from DnaK; ATP binding to DnaK triggers the release of the substrate protein, thus completing the reaction cycle. Several rounds of ATP-dependent interactions between DnaJ, DnaK and GrpE are required for fully efficient folding. Also involved, together with DnaK and GrpE, in the DNA replication of plasmids through activation of initiation proteins. The polypeptide is Chaperone protein DnaJ (Lactococcus lactis subsp. cremoris (Streptococcus cremoris)).